The following is a 262-amino-acid chain: tRNA (guanine-N(1)-)-methyltransferase (262 aa).

S-adenosyl-L-methionine contacts are provided by residues G113 and I137–L142.

The protein belongs to the RNA methyltransferase TrmD family. In terms of assembly, homodimer.

It localises to the cytoplasm. The catalysed reaction is guanosine(37) in tRNA + S-adenosyl-L-methionine = N(1)-methylguanosine(37) in tRNA + S-adenosyl-L-homocysteine + H(+). Functionally, specifically methylates guanosine-37 in various tRNAs. This chain is tRNA (guanine-N(1)-)-methyltransferase, found in Thermobifida fusca (strain YX).